The chain runs to 341 residues: S-adenosylmethionine:tRNA ribosyltransferase-isomerase (341 aa).

It belongs to the QueA family. In terms of assembly, monomer.

The protein localises to the cytoplasm. The enzyme catalyses 7-aminomethyl-7-carbaguanosine(34) in tRNA + S-adenosyl-L-methionine = epoxyqueuosine(34) in tRNA + adenine + L-methionine + 2 H(+). It functions in the pathway tRNA modification; tRNA-queuosine biosynthesis. Transfers and isomerizes the ribose moiety from AdoMet to the 7-aminomethyl group of 7-deazaguanine (preQ1-tRNA) to give epoxyqueuosine (oQ-tRNA). The sequence is that of S-adenosylmethionine:tRNA ribosyltransferase-isomerase from Thermoanaerobacter sp. (strain X514).